The chain runs to 548 residues: MAAKDVLFGNDARTKMLRGVNVLADAVKVTLGPKGRNVVIDKSFGGPTITKDGVTVAKEIELDDKFENMGAQMVKEVASKANDEAGDGTTTATVLAQAIVNEGLKSIAAGMNPMDLKRGIDKAVIAAVAALKDASTPVTDNKAIEQVGTISANSDETVGQIIATAMDKVGAEGVITVEEGQALTDELDVVEGMQFDRGYLSPYFINKQENGTVELENPFILLVDKKVSNIRELLTTLEAVAKSGKPLLIIAEDVEGEALATLVVNNMRGIVKVAAVKAPGFGDRRKAMLQDVATLTAGTVISEEIGMELEKATLEDLGQAKRVVISKDTTIIIDGIGEEADIKARVSQIRGQIEDSSSDYDKEKLQERLAKLAGGVAVIKIGAATEIEMKEKKARVEDALHATRAAVEEGVVAGGGVALVRAAEAIKDLEGINEDQTHGINVAIRAMEAPLRQIVANCGDEASVVLNEVRNGEGNYGYNAGNSTYGDMIAMGILDPTKVTRSALQFAASVAGLMLTTEAMITDAPQDSAPAMPDMGGMGGMGGMGGMM.

ATP contacts are provided by residues 30–33 (TLGP), lysine 51, 87–91 (DGTTT), glycine 415, and aspartate 495.

Belongs to the chaperonin (HSP60) family. In terms of assembly, forms a cylinder of 14 subunits composed of two heptameric rings stacked back-to-back. Interacts with the co-chaperonin GroES.

Its subcellular location is the cytoplasm. The enzyme catalyses ATP + H2O + a folded polypeptide = ADP + phosphate + an unfolded polypeptide.. Its function is as follows. Together with its co-chaperonin GroES, plays an essential role in assisting protein folding. The GroEL-GroES system forms a nano-cage that allows encapsulation of the non-native substrate proteins and provides a physical environment optimized to promote and accelerate protein folding. This is Chaperonin GroEL from Colwellia psychrerythraea (strain 34H / ATCC BAA-681) (Vibrio psychroerythus).